A 492-amino-acid chain; its full sequence is N-succinylglutamate 5-semialdehyde dehydrogenase (492 aa).

220 to 225 is an NAD(+) binding site; it reads GSANTG. Catalysis depends on residues Glu243 and Cys277.

This sequence belongs to the aldehyde dehydrogenase family. AstD subfamily.

It catalyses the reaction N-succinyl-L-glutamate 5-semialdehyde + NAD(+) + H2O = N-succinyl-L-glutamate + NADH + 2 H(+). It participates in amino-acid degradation; L-arginine degradation via AST pathway; L-glutamate and succinate from L-arginine: step 4/5. Functionally, catalyzes the NAD-dependent reduction of succinylglutamate semialdehyde into succinylglutamate. This Shigella flexneri serotype 5b (strain 8401) protein is N-succinylglutamate 5-semialdehyde dehydrogenase.